Consider the following 249-residue polypeptide: Acetate transporter protein patA (249 aa).

A run of 6 helical transmembrane segments spans residues 42-62, 71-91, 106-126, 141-161, 169-189, and 202-222; these read IGSP…TLSM, AITN…LVLV, VFGG…PAFG, AIGY…VAAM, GMLG…FSFA, and AAGA…GHLM.

The protein belongs to the acetate uptake transporter (AceTr) (TC 2.A.96) family.

It localises to the endoplasmic reticulum membrane. It participates in mycotoxin biosynthesis; patulin biosynthesis. Acetate transporter protein; part of the gene cluster that mediates the biosynthesis of patulin, an acetate-derived tetraketide mycotoxin produced by several fungal species that shows antimicrobial properties against several bacteria. May be involved in the uptake of acetate, a substrate for the synthesis of 6-methylsalicylic acid by the polyketide synthase patK. This is Acetate transporter protein patA from Penicillium expansum (Blue mold rot fungus).